The chain runs to 284 residues: Efem/EfeO family lipoprotein (284 aa).

Positions 1 to 17 (MKKLTTLLLASTLLIAA) are cleaved as a signal peptide. The N-palmitoyl cysteine moiety is linked to residue Cys18. A lipid anchor (S-diacylglycerol cysteine) is attached at Cys18.

It belongs to the EfeM/EfeO family.

It localises to the cell membrane. The polypeptide is Efem/EfeO family lipoprotein (Staphylococcus aureus (strain MSSA476)).